The primary structure comprises 453 residues: Neuraminidase (453 aa).

Residues 1–6 (MNPNQK) lie on the Intravirion side of the membrane. The helical transmembrane segment at 7–27 (IITIGSICMVVGIISLILQIG) threads the bilayer. The tract at residues 11 to 33 (GSICMVVGIISLILQIGNIISIW) is involved in apical transport and lipid raft association. Topologically, residues 28 to 453 (NIISIWISHS…GAELPFTIDK (426 aa)) are virion surface. The tract at residues 36–74 (HSIQTGNQNHTGICNQGIITYNVVAGQDSTSVILTGNSS) is hypervariable stalk region. N-linked (GlcNAc...) asparagine; by host glycans are attached at residues N44 and N72. The segment at 75–453 (LCPIRGWAIH…GAELPFTIDK (379 aa)) is head of neuraminidase. Cystine bridges form between C76-C401, C108-C113, C168-C215, C217-C222, C263-C276, C265-C274, C302-C319, and C405-C430. R102 lines the substrate pocket. N-linked (GlcNAc...) asparagine; by host glycosylation occurs at N130. The active-site Proton donor/acceptor is the D135. R136 provides a ligand contact to substrate. N219 carries N-linked (GlcNAc...) asparagine; by host glycosylation. 261-262 (EE) serves as a coordination point for substrate. R277 contributes to the substrate binding site. Ca(2+) is bound by residues D278, G282, D308, and N328. Position 352 (R352) interacts with substrate. Catalysis depends on Y386, which acts as the Nucleophile.

It belongs to the glycosyl hydrolase 34 family. Homotetramer. Ca(2+) serves as cofactor. N-glycosylated.

It localises to the virion membrane. The protein localises to the host apical cell membrane. It carries out the reaction Hydrolysis of alpha-(2-&gt;3)-, alpha-(2-&gt;6)-, alpha-(2-&gt;8)- glycosidic linkages of terminal sialic acid residues in oligosaccharides, glycoproteins, glycolipids, colominic acid and synthetic substrates.. With respect to regulation, inhibited by the neuraminidase inhibitors zanamivir (Relenza) and oseltamivir (Tamiflu). These drugs interfere with the release of progeny virus from infected cells and are effective against all influenza strains. Resistance to neuraminidase inhibitors is quite rare. Unlike other strains, A/WSN/33 neuraminidase binds and activates plasminogen into plasmin in the vicinity of HA so that activated plasmin cleaves HA rendering the virus infectious. In terms of biological role, catalyzes the removal of terminal sialic acid residues from viral and cellular glycoconjugates. Cleaves off the terminal sialic acids on the glycosylated HA during virus budding to facilitate virus release. Additionally helps virus spread through the circulation by further removing sialic acids from the cell surface. These cleavages prevent self-aggregation and ensure the efficient spread of the progeny virus from cell to cell. Otherwise, infection would be limited to one round of replication. Described as a receptor-destroying enzyme because it cleaves a terminal sialic acid from the cellular receptors. May facilitate viral invasion of the upper airways by cleaving the sialic acid moieties on the mucin of the airway epithelial cells. Likely to plays a role in the budding process through its association with lipid rafts during intracellular transport. May additionally display a raft-association independent effect on budding. Plays a role in the determination of host range restriction on replication and virulence. Sialidase activity in late endosome/lysosome traffic seems to enhance virus replication. This is Neuraminidase from Influenza A virus (strain A/Wilson-Smith/1933 H1N1) (Influenza A virus (strain A/WS/1933 H1N1)).